The following is a 316-amino-acid chain: 4-hydroxy-3-methylbut-2-enyl diphosphate reductase (316 aa).

Residue C12 coordinates [4Fe-4S] cluster. Residues H43 and H81 each contribute to the (2E)-4-hydroxy-3-methylbut-2-enyl diphosphate site. Residues H43 and H81 each coordinate dimethylallyl diphosphate. Isopentenyl diphosphate is bound by residues H43 and H81. A [4Fe-4S] cluster-binding site is contributed by C103. H131 contacts (2E)-4-hydroxy-3-methylbut-2-enyl diphosphate. Residue H131 coordinates dimethylallyl diphosphate. H131 lines the isopentenyl diphosphate pocket. The active-site Proton donor is the E133. A (2E)-4-hydroxy-3-methylbut-2-enyl diphosphate-binding site is contributed by T170. C198 is a binding site for [4Fe-4S] cluster. (2E)-4-hydroxy-3-methylbut-2-enyl diphosphate-binding residues include S226, N228, and S271. Dimethylallyl diphosphate is bound by residues S226, N228, and S271. Positions 226, 228, and 271 each coordinate isopentenyl diphosphate.

This sequence belongs to the IspH family. The cofactor is [4Fe-4S] cluster.

It carries out the reaction isopentenyl diphosphate + 2 oxidized [2Fe-2S]-[ferredoxin] + H2O = (2E)-4-hydroxy-3-methylbut-2-enyl diphosphate + 2 reduced [2Fe-2S]-[ferredoxin] + 2 H(+). The enzyme catalyses dimethylallyl diphosphate + 2 oxidized [2Fe-2S]-[ferredoxin] + H2O = (2E)-4-hydroxy-3-methylbut-2-enyl diphosphate + 2 reduced [2Fe-2S]-[ferredoxin] + 2 H(+). Its pathway is isoprenoid biosynthesis; dimethylallyl diphosphate biosynthesis; dimethylallyl diphosphate from (2E)-4-hydroxy-3-methylbutenyl diphosphate: step 1/1. It functions in the pathway isoprenoid biosynthesis; isopentenyl diphosphate biosynthesis via DXP pathway; isopentenyl diphosphate from 1-deoxy-D-xylulose 5-phosphate: step 6/6. Functionally, catalyzes the conversion of 1-hydroxy-2-methyl-2-(E)-butenyl 4-diphosphate (HMBPP) into a mixture of isopentenyl diphosphate (IPP) and dimethylallyl diphosphate (DMAPP). Acts in the terminal step of the DOXP/MEP pathway for isoprenoid precursor biosynthesis. This chain is 4-hydroxy-3-methylbut-2-enyl diphosphate reductase, found in Geobacillus thermodenitrificans (strain NG80-2).